The sequence spans 339 residues: Probable long-chain-alcohol O-fatty-acyltransferase 7 (339 aa).

7 helical membrane passes run 7–27, 39–59, 113–133, 143–163, 226–246, 254–274, and 287–307; these read SLIN…CLPP, IFPV…SIFT, HLST…LYVH, FLLC…LTLL, MLIG…VVFF, TGEV…EVAA, and PVVS…WLFF.

Belongs to the wax synthase family.

The protein localises to the membrane. The enzyme catalyses a long chain fatty alcohol + a fatty acyl-CoA = a wax ester + CoA. Its function is as follows. Catalyzes the final step in the synthesis of long-chain linear esters (waxes). This is Probable long-chain-alcohol O-fatty-acyltransferase 7 (AT7) from Arabidopsis thaliana (Mouse-ear cress).